The primary structure comprises 297 residues: Phosphoribosylaminoimidazole-succinocarboxamide synthase (297 aa).

The protein belongs to the SAICAR synthetase family.

The enzyme catalyses 5-amino-1-(5-phospho-D-ribosyl)imidazole-4-carboxylate + L-aspartate + ATP = (2S)-2-[5-amino-1-(5-phospho-beta-D-ribosyl)imidazole-4-carboxamido]succinate + ADP + phosphate + 2 H(+). It functions in the pathway purine metabolism; IMP biosynthesis via de novo pathway; 5-amino-1-(5-phospho-D-ribosyl)imidazole-4-carboxamide from 5-amino-1-(5-phospho-D-ribosyl)imidazole-4-carboxylate: step 1/2. This Mycobacterium sp. (strain KMS) protein is Phosphoribosylaminoimidazole-succinocarboxamide synthase.